Here is a 122-residue protein sequence, read N- to C-terminus: Large ribosomal subunit protein uL14 (122 aa).

It belongs to the universal ribosomal protein uL14 family. In terms of assembly, part of the 50S ribosomal subunit. Forms a cluster with proteins L3 and L19. In the 70S ribosome, L14 and L19 interact and together make contacts with the 16S rRNA in bridges B5 and B8.

In terms of biological role, binds to 23S rRNA. Forms part of two intersubunit bridges in the 70S ribosome. The sequence is that of Large ribosomal subunit protein uL14 from Pseudomonas savastanoi pv. phaseolicola (strain 1448A / Race 6) (Pseudomonas syringae pv. phaseolicola (strain 1448A / Race 6)).